The chain runs to 200 residues: 3-isopropylmalate dehydratase small subunit (200 aa).

It belongs to the LeuD family. LeuD type 1 subfamily. In terms of assembly, heterodimer of LeuC and LeuD.

It carries out the reaction (2R,3S)-3-isopropylmalate = (2S)-2-isopropylmalate. It functions in the pathway amino-acid biosynthesis; L-leucine biosynthesis; L-leucine from 3-methyl-2-oxobutanoate: step 2/4. Functionally, catalyzes the isomerization between 2-isopropylmalate and 3-isopropylmalate, via the formation of 2-isopropylmaleate. The polypeptide is 3-isopropylmalate dehydratase small subunit (Photobacterium profundum (strain SS9)).